The primary structure comprises 163 residues: Nucleotide-binding protein LBJ_2391 (163 aa).

Belongs to the YajQ family.

Nucleotide-binding protein. This Leptospira borgpetersenii serovar Hardjo-bovis (strain JB197) protein is Nucleotide-binding protein LBJ_2391.